We begin with the raw amino-acid sequence, 231 residues long: Small ribosomal subunit protein uS5 (231 aa).

Residues 61–124 enclose the S5 DRBM domain; it reads KFRSKKPYRM…NRAKLNIIKV (64 aa).

The protein belongs to the universal ribosomal protein uS5 family. Part of the 30S ribosomal subunit. Contacts protein S4.

Its function is as follows. With S4 and S12 plays an important role in translational accuracy. In Nanoarchaeum equitans (strain Kin4-M), this protein is Small ribosomal subunit protein uS5.